A 633-amino-acid polypeptide reads, in one-letter code: Kelch-like protein diablo (633 aa).

Residues 1–62 (MGDLPGSTGG…ARLSHTSEKH (62 aa)) form a disordered region. Residues 7 to 25 (STGGGGGVGGGGNGGGGPT) are compositionally biased toward gly residues. Low complexity predominate over residues 26–45 (IAGTNGNSTTGPGSSTGSTG). One can recognise a BTB domain in the interval 80-147 (CDVVLNVGGR…CYTAHIIVEE (68 aa)). One can recognise a BACK domain in the interval 182 to 284 (CLGIRAFADT…SPKFLVGTVG (103 aa)). Kelch repeat units lie at residues 331-377 (VLFA…VLND), 379-425 (LYAV…VLDG), 426-472 (FLYA…VLGG), 474-519 (LYAI…VFNN), 521-566 (IYAV…VVNG), and 567-613 (QLYA…VMRA).

Its pathway is protein modification; protein ubiquitination. Its function is as follows. Probable substrate-specific adapter of an E3 ubiquitin-protein ligase complex which mediates the ubiquitination and subsequent proteasomal degradation of target proteins. May have a role in synapse differentiation and growth. The polypeptide is Kelch-like protein diablo (Drosophila ananassae (Fruit fly)).